The following is a 307-amino-acid chain: Transmembrane and coiled-coil domain-containing protein 5B (307 aa).

A coiled-coil region spans residues 17–207; that stretch reads FASSLEAVKQ…LEKQISKAQD (191 aa). The helical transmembrane segment at 243-265 threads the bilayer; it reads YFQYLTFMVLVFIRLLAYVIFHL.

This sequence belongs to the TMCO5 family.

Its subcellular location is the membrane. This Homo sapiens (Human) protein is Transmembrane and coiled-coil domain-containing protein 5B (TMCO5B).